We begin with the raw amino-acid sequence, 469 residues long: Tubulin gamma-2 chain (469 aa).

142–148 (AGGTGSG) provides a ligand contact to GTP.

This sequence belongs to the tubulin family.

It localises to the cytoplasm. The protein resides in the cytoskeleton. It is found in the microtubule organizing center. Functionally, tubulin is the major constituent of microtubules. The gamma chain is found at microtubule organizing centers (MTOC) such as the spindle poles, suggesting that it is involved in the minus-end nucleation of microtubule assembly. The polypeptide is Tubulin gamma-2 chain (TUBG2) (Oryza sativa subsp. japonica (Rice)).